A 601-amino-acid polypeptide reads, in one-letter code: Probable HECT-type ubiquitin ligase-interacting protein creD (601 aa).

2 disordered regions span residues 374 to 397 and 455 to 489; these read EVDP…GTLS and SADY…DHDH. Over residues 461-473 the composition is skewed to low complexity; that stretch reads PSSGSNSHSPASP. The segment covering 475 to 489 has biased composition (basic and acidic residues); the sequence is LSRRPSDEGYHDHDH.

The protein belongs to the arrestin family. In terms of assembly, interacts with hulA.

Its function is as follows. Component of the regulatory network controlling carbon source utilization through ubiquitination and deubiquitination involving creA, creB, creC, creD and acrB. May be involved in signaling by recognizing appropriately phosphorylated substrates via its arrestin domains and then recruit a HECT-type ubiquitin ligase such as hulA, leading to ubiquitination of the substrate, providing a link between ubiquitination and phosphorylation in protein regulation and stability. This Neosartorya fischeri (strain ATCC 1020 / DSM 3700 / CBS 544.65 / FGSC A1164 / JCM 1740 / NRRL 181 / WB 181) (Aspergillus fischerianus) protein is Probable HECT-type ubiquitin ligase-interacting protein creD (creD).